The sequence spans 769 residues: Glutathione biosynthesis bifunctional protein GshAB (769 aa).

Residues 1–347 are glutamate--cysteine ligase; the sequence is MLDSFKEDPK…QLADENENNI (347 aa). The ATP-grasp domain maps to 514–768; it reads KLVLAEHDIR…IGDKILDFLF (255 aa). 541–599 provides a ligand contact to ATP; that stretch reads SLFEDKQIVVKPKSTNYGWGISIFKNKFTLEDYQEALNIAFSYDSSVIIEEFIPGDEFR. Aspartate 721, glutamate 738, and asparagine 740 together coordinate Mg(2+). Mn(2+) is bound by residues aspartate 721, glutamate 738, and asparagine 740.

This sequence in the N-terminal section; belongs to the glutamate--cysteine ligase type 1 family. Type 2 subfamily. As to quaternary structure, monomer. It depends on Mg(2+) as a cofactor. The cofactor is Mn(2+).

The catalysed reaction is L-cysteine + L-glutamate + ATP = gamma-L-glutamyl-L-cysteine + ADP + phosphate + H(+). The enzyme catalyses gamma-L-glutamyl-L-cysteine + glycine + ATP = glutathione + ADP + phosphate + H(+). It participates in sulfur metabolism; glutathione biosynthesis; glutathione from L-cysteine and L-glutamate: step 1/2. It functions in the pathway sulfur metabolism; glutathione biosynthesis; glutathione from L-cysteine and L-glutamate: step 2/2. Its function is as follows. Synthesizes glutathione from L-glutamate and L-cysteine via gamma-L-glutamyl-L-cysteine. This is Glutathione biosynthesis bifunctional protein GshAB from Listeria monocytogenes serotype 4b (strain F2365).